The primary structure comprises 121 residues: uncharacterized protein (121 aa).

Transmembrane regions (helical) follow at residues 26–46 (YACSIFLLSSYCGNCLTAVAT), 57–77 (SIPLLTLVLLPSTTPSSSVLI), and 90–110 (SFCFTLALLSLLIPPLKLLCV).

Its subcellular location is the membrane. This is an uncharacterized protein from Saccharomyces cerevisiae (strain ATCC 204508 / S288c) (Baker's yeast).